The sequence spans 361 residues: DNA replication and repair protein RecF (361 aa).

30 to 37 is a binding site for ATP; sequence GPNGSGKT.

Belongs to the RecF family.

Its subcellular location is the cytoplasm. In terms of biological role, the RecF protein is involved in DNA metabolism; it is required for DNA replication and normal SOS inducibility. RecF binds preferentially to single-stranded, linear DNA. It also seems to bind ATP. The chain is DNA replication and repair protein RecF from Yersinia pseudotuberculosis serotype IB (strain PB1/+).